Here is a 1804-residue protein sequence, read N- to C-terminus: Collagen alpha-1(XI) chain (1804 aa).

The N-terminal stretch at 1–34 (MEPWSRWKTKRWIWDLTISTLALTFLFQAREVRG) is a signal peptide. Residues 35-511 (AAPVDILKAL…SKGPTISAQE (477 aa)) constitute a propeptide, N-terminal propeptide. Intrachain disulfides connect cysteine 60–cysteine 242 and cysteine 181–cysteine 235. The 173-residue stretch at 70-242 (DVAYRVTEEA…DYCDHYSPDC (173 aa)) folds into the Laminin G-like domain. The interval 229–417 (KAAYDYCDHY…DFTETSINGH (189 aa)) is nonhelical region. Positions 315–329 (YQTETPRRVSGSNEP) are enriched in polar residues. Disordered regions lie at residues 315 to 334 (YQTETPRRVSGSNEPNPVEE) and 433 to 506 (EPGM…KGPT). Positions 418-506 (GAYGEKGQKG…YGGDGSKGPT (89 aa)) are triple-helical region (interrupted). The Collagen-like 1 domain maps to 440 to 488 (GPPGPAGPAGLMGPPGLQGPSGLPGDPGDRGPPGRPGLPGADGLPGPPG). Composition is skewed to low complexity over residues 447 to 465 (PAGLMGPPGLQGPSGLPGD) and 477 to 494 (LPGADGLPGPPGTMLMLP). The interval 507–509 (ISA) is short nonhelical segment. The segment at 510-527 (QEAQAQAILQQARIALRG) is telopeptide. The tract at residues 526-1567 (RGPPGPMGLT…SIQGDAGDNI (1042 aa)) is disordered. Collagen-like domains follow at residues 527 to 584 (GPPG…GADG) and 567 to 623 (PPGP…GPPG). Positions 528–1540 (PPGPMGLTGR…PGPPGPPGEV (1013 aa)) are triple-helical region. Composition is skewed to gly residues over residues 539–548 (GPVGGPGSAG) and 581–590 (GADGGRGMPG). Allysine is present on lysine 610. A compositionally biased stretch (low complexity) spans 639–655 (PRGLPGEAGPRGLLGPR). A compositionally biased stretch (pro residues) spans 697–708 (QGLPGPQGPIGP). Over residues 715 to 726 (QGKPGLAGLPGA) the composition is skewed to low complexity. In terms of domain architecture, Collagen-like 4 spans 728–781 (GPPGHPGKEGQSGEKGALGPPGPQGPIGYPGPRGVKGADGVRGLKGSKGEKGED). Over residues 805–814 (RGEDGPEGPK) the composition is skewed to basic and acidic residues. Low complexity-rich tracts occupy residues 873–901 (KPGPRGQRGPTGPRGSRGARGPTGKPGPK), 916–925 (RGPQGPQGPV), and 969–979 (PQGPTGETGPI). Positions 1040–1049 (GLKGGEGPQG) are enriched in gly residues. Residues 1074-1083 (RPGPQGPPGP) show a composition bias toward pro residues. Residues 1084 to 1108 (AGEKGAPGEKGPQGPAGRDGVQGPV) show a composition bias toward low complexity. Over residues 1160-1169 (GIAGGDGEPG) the composition is skewed to gly residues. Residues 1216-1227 (MGPPGPPGPRGP) show a composition bias toward pro residues. 2 stretches are compositionally biased toward low complexity: residues 1240 to 1249 (PGSIGSVGVV) and 1282 to 1296 (AGPPGAAGPAGIKGP). The span at 1341–1360 (QPGPPGPSGEAGPPGPPGKR) shows a compositional bias: pro residues. Low complexity-rich tracts occupy residues 1383–1392 (AEGPPGKTGP) and 1417–1426 (QGLPGAAGQD). 2 consecutive Collagen-like domains span residues 1427–1482 (GPPG…SPGA) and 1481–1539 (GAKG…PPGE). Positions 1428–1437 (PPGPLGPPGL) are enriched in pro residues. Lysine 1450 is subject to Allysine. The segment covering 1453-1462 (PGLIGLIGPP) has biased composition (low complexity). The segment covering 1481–1490 (GAKGDGGIPG) has biased composition (gly residues). Positions 1491 to 1507 (PAGPIGPPGPPGLPGPA) are enriched in pro residues. Residues 1509–1519 (PKGNKGSSGPT) are compositionally biased toward low complexity. Residues 1528-1537 (PGPPGPPGPP) show a composition bias toward pro residues. Residues 1541–1561 (IQPLPILSPKKTRRHTESIQG) are nonhelical region (C-terminal). The propeptide at 1562–1804 (DAGDNILDYS…FEVGPACFLG (243 aa)) is C-terminal propeptide. Residues 1575–1803 (EEIFGSLNSL…GFEVGPACFL (229 aa)) enclose the Fibrillar collagen NC1 domain. Cysteine 1605 and cysteine 1637 form a disulfide bridge. Positions 1623, 1625, 1626, 1628, and 1631 each coordinate Ca(2+). An N-linked (GlcNAc...) asparagine glycan is attached at asparagine 1638. Disulfide bonds link cysteine 1646–cysteine 1801 and cysteine 1712–cysteine 1755.

Belongs to the fibrillar collagen family. Trimers composed of three different chains: alpha 1(XI), alpha 2(XI), and alpha 3(XI). Alpha 3(XI) is a post-translational modification of alpha 1(II). Alpha 1(V) can also be found instead of alpha 3(XI)=1(II). Prolines at the third position of the tripeptide repeating unit (G-X-Y) are hydroxylated in some or all of the chains. Post-translationally, N-glycosylated.

Its subcellular location is the secreted. It localises to the extracellular space. It is found in the extracellular matrix. Its function is as follows. May play an important role in fibrillogenesis by controlling lateral growth of collagen II fibrils. The protein is Collagen alpha-1(XI) chain (Col11a1) of Mus musculus (Mouse).